Here is a 372-residue protein sequence, read N- to C-terminus: Chemerin-like receptor 1 (372 aa).

The Extracellular portion of the chain corresponds to 1–39 (MEYEGYNDSSIYGEEYSDGSDYIVDLEEAGPLEAKVAEV). An N-linked (GlcNAc...) asparagine glycan is attached at N7. The helical transmembrane segment at 40–62 (FLVVIYSLVCFLGILGNGLVIVI) threads the bilayer. Residues 63–73 (ATFKMKKTVNT) are Cytoplasmic-facing. A helical transmembrane segment spans residues 74–95 (VWFVNLAVADFLFNIFLPIHIT). Topologically, residues 96–112 (YAAMDYHWVFGKAMCKI) are extracellular. C110 and C188 form a disulfide bridge. A helical transmembrane segment spans residues 113–133 (SSFLLSHNMYTSVFLLTVISF). Over 134–152 (DRCISVLLPVWSQNHRSVR) the chain is Cytoplasmic. A helical membrane pass occupies residues 153 to 174 (LAYMTCVVVWVLAFFLSSPSLV). Residues 175–223 (FRDTVSTSHGKITCFNNFSLAAPEPFSHSTHPRTDPVGYSRHVAVTVTR) are Extracellular-facing. N191 carries an N-linked (GlcNAc...) asparagine glycan. Residues 224–244 (FLCGFLIPVFIITACYLTIVF) traverse the membrane as a helical segment. Residues 245–260 (KLQRNRLAKTKKPFKI) are Cytoplasmic-facing. A helical membrane pass occupies residues 261 to 281 (IITIIITFFLCWCPYHTLYLL). At 282 to 299 (ELHHTAVPASVFSLGLPL) the chain is on the extracellular side. The helical transmembrane segment at 300-319 (ATAVAIANSCMNPILYVFMG) threads the bilayer. At 320–372 (HDFKKFKVALFSRLVNALSEDTGPSSYPSHRSFTKMSSLIEKASVNEKETSTL) the chain is on the cytoplasmic side. S338 carries the phosphoserine modification. T341 is subject to Phosphothreonine. Residues S348, S351, and S357 each carry the phosphoserine modification. Position 371 is a phosphothreonine (T371).

Belongs to the chemokine-like receptor (CMKLR) family. High expression in heart and lung, low in small intestines, colon, kidney, liver, uterus and brain.

Its subcellular location is the cell membrane. Receptor for the chemoattractant adipokine chemerin/RARRES2 and for the omega-3 fatty acid derived molecule resolvin E1. Interaction with RARRES2 initiates activation of G proteins G(i)/G(o) and beta-arrestin pathways inducing cellular responses via second messenger pathways such as intracellular calcium mobilization, phosphorylation of MAP kinases MAPK1/MAPK3 (ERK1/2), TYRO3, MAPK14/P38MAPK and PI3K leading to multifunctional effects, like, reduction of immune responses, enhancing of adipogenesis and angionesis. Resolvin E1 down-regulates cytokine production in macrophages by reducing the activation of MAPK1/3 (ERK1/2) and NF-kappa-B. Positively regulates adipogenesis and adipocyte metabolism. The protein is Chemerin-like receptor 1 (Cmklr1) of Rattus norvegicus (Rat).